The sequence spans 160 residues: Nucleotide-binding protein VV1636 (160 aa).

Belongs to the YajQ family.

Its function is as follows. Nucleotide-binding protein. The protein is Nucleotide-binding protein VV1636 of Vibrio vulnificus (strain YJ016).